The primary structure comprises 406 residues: Pygopus homolog 2 (406 aa).

2 disordered regions span residues 1–73 (MAAS…DHLV) and 106–323 (VQGG…PQPP). Ala-2 is modified (N-acetylalanine). A Phosphoserine modification is found at Ser-40. The Nuclear localization signal signature appears at 41–47 (PEKKRRK). 2 stretches are compositionally biased toward pro residues: residues 131-141 (RQPPPFPPNPM) and 149-158 (PQGPGYPPPG). Polar residues predominate over residues 164–179 (SQPFNQPLGQNFSPPS). The span at 236–252 (SLPPNTSPFPGPDPGFP) shows a compositional bias: pro residues. Residues 285–296 (NGNQPSFPPNSS) are compositionally biased toward polar residues. Position 302 is a phosphothreonine (Thr-302). The segment at 327–385 (VYPCGACRSEVNDDQDAILCEASCQKWFHRECTGMTESAYGLLTTEASAVWACDLCLKT) adopts a PHD-type zinc-finger fold.

Binds to BCL9 via the PHD-type zinc finger motif, and thereby becomes part of the nuclear beta-catenin/TCF complex.

The protein localises to the nucleus. Its function is as follows. Involved in signal transduction through the Wnt pathway. The polypeptide is Pygopus homolog 2 (PYGO2) (Homo sapiens (Human)).